We begin with the raw amino-acid sequence, 78 residues long: UPF0349 protein SAHV_0934 (78 aa).

It belongs to the UPF0349 family.

The protein is UPF0349 protein SAHV_0934 of Staphylococcus aureus (strain Mu3 / ATCC 700698).